Consider the following 460-residue polypeptide: NADH-ubiquinone oxidoreductase chain 4 (460 aa).

A run of 13 helical transmembrane segments spans residues 20-42 (SKWL…LTWL), 61-81 (PLST…ILAS), 94-113 (RMYI…AFGA), 114-134 (TKII…LIII), 148-168 (TYFL…LLLL), 195-215 (IWWA…GMHL), 225-245 (PVAG…YGMM), 258-278 (LAYP…LVCL), 285-304 (SLIA…GILI), 308-330 (WGFT…LFCL), 351-371 (MVLP…LALP), 380-400 (LMII…TGMG), and 436-456 (LLMT…ELMW).

The protein belongs to the complex I subunit 4 family. As to quaternary structure, core subunit of respiratory chain NADH dehydrogenase (Complex I) which is composed of 45 different subunits.

It is found in the mitochondrion inner membrane. It catalyses the reaction a ubiquinone + NADH + 5 H(+)(in) = a ubiquinol + NAD(+) + 4 H(+)(out). Functionally, core subunit of the mitochondrial membrane respiratory chain NADH dehydrogenase (Complex I) which catalyzes electron transfer from NADH through the respiratory chain, using ubiquinone as an electron acceptor. Essential for the catalytic activity and assembly of complex I. In Danio rerio (Zebrafish), this protein is NADH-ubiquinone oxidoreductase chain 4 (mt-nd4).